The chain runs to 365 residues: Neuronal migration protein doublecortin (365 aa).

A disordered region spans residues 11-31; sequence RDKTSRNMRGSRMNGLPSPTH. At T14 the chain carries Phosphothreonine; by PKC. At S28 the chain carries Phosphoserine; by CDK5. S47 carries the phosphoserine; by MARK1 and PKA modification. Doublecortin domains are found at residues 53–139 and 180–263; these read KKVR…VEYT and KLVT…AQDD. Y70 bears the Phosphotyrosine; by ABL mark. Phosphoserine; by PKC is present on S74. A Phosphoserine; by CK2 modification is found at S90. S110 is modified (phosphoserine; by PKC). A Phosphoserine; by CK2, MARK1 and PKA modification is found at S115. S265 is subject to Phosphoserine; by CK2. A disordered region spans residues 275–365; sequence KGNPSATAGP…DDSDSLGDSM (91 aa). At S287 the chain carries Phosphoserine; by CDK5. At T289 the chain carries Phosphothreonine; by CDK5. A Phosphoserine; by PKC modification is found at S294. S297 bears the Phosphoserine; by CDK5 mark. S306 is modified (phosphoserine; by CK2). A Phosphoserine; by DYRK2 modification is found at S306. A compositionally biased stretch (polar residues) spans 307–341; it reads PADSGNDQDANGTSSSQLSTPKSKQSPISTPTSPG. T326 carries the post-translational modification Phosphothreonine; by CDK5. T326 is subject to Phosphothreonine; by PKC and MAPK. S332 bears the Phosphoserine; by CDK5 mark. S332 is subject to Phosphoserine; by MAPK. T336 bears the Phosphothreonine; by MAPK mark. At S339 the chain carries Phosphoserine; by CDK5. The residue at position 339 (S339) is a Phosphoserine; by MAPK. The residue at position 342 (S342) is a Phosphoserine; by PKC. A phosphoserine; by CK2 mark is found at S354 and S360. Positions 356 to 365 are enriched in acidic residues; that stretch reads DDSDSLGDSM.

As to quaternary structure, interacts with tubulin. Interacts with USP9X. Phosphorylation by MARK1, MARK2 and PKA regulates its ability to bind microtubules. Phosphorylation at Ser-265 and Ser-297 seems to occur only in neonatal brain, the levels falling precipitously by postnatal day 21. Post-translationally, ubiquitinated by MDM2, leading to its degradation by the proteasome. Ubiquitinated by MDM2 and subsequent degradation leads to reduce the dendritic spine density of olfactory bulb granule cells. As to expression, highly expressed in neuronal cells of fetal brain (in the majority of cells of the cortical plate, intermediate zone and ventricular zone), but not expressed in other fetal tissues. In the adult, highly expressed in the brain frontal lobe, but very low expression in other regions of brain, and not detected in heart, placenta, lung, liver, skeletal muscles, kidney and pancreas.

It localises to the cytoplasm. It is found in the cell projection. The protein resides in the neuron projection. Functionally, microtubule-associated protein required for initial steps of neuronal dispersion and cortex lamination during cerebral cortex development. May act by competing with the putative neuronal protein kinase DCLK1 in binding to a target protein. May in that way participate in a signaling pathway that is crucial for neuronal interaction before and during migration, possibly as part of a calcium ion-dependent signal transduction pathway. May be part with PAFAH1B1/LIS-1 of overlapping, but distinct, signaling pathways that promote neuronal migration. This chain is Neuronal migration protein doublecortin (DCX), found in Homo sapiens (Human).